Here is a 647-residue protein sequence, read N- to C-terminus: Exoribonuclease 2 (647 aa).

An RNB domain is found at 191–517 (REDLCALPFV…VNHRLLKALI (327 aa)). The 83-residue stretch at 563–645 (PTPFNAEIID…DTRSLIARPF (83 aa)) folds into the S1 motif domain.

It belongs to the RNR ribonuclease family. RNase II subfamily.

It localises to the cytoplasm. It catalyses the reaction Exonucleolytic cleavage in the 3'- to 5'-direction to yield nucleoside 5'-phosphates.. Involved in mRNA degradation. Hydrolyzes single-stranded polyribonucleotides processively in the 3' to 5' direction. The polypeptide is Exoribonuclease 2 (Edwardsiella piscicida).